A 273-amino-acid chain; its full sequence is Serine acetyltransferase (273 aa).

This sequence belongs to the transferase hexapeptide repeat family. In terms of assembly, homohexamer. Dimer of a homotrimer.

The protein localises to the cytoplasm. It carries out the reaction L-serine + acetyl-CoA = O-acetyl-L-serine + CoA. The protein operates within amino-acid biosynthesis; L-cysteine biosynthesis; L-cysteine from L-serine: step 1/2. In Shigella flexneri, this protein is Serine acetyltransferase (cysE).